We begin with the raw amino-acid sequence, 138 residues long: MNTETKSLPAWLDKVRWDDNGLVPVIAQEASTNDVLMFAWMNREALAKTVETRRAVYYSRSRKRLWFKGEESGHVQHLHEVRLDCDEDVVLLKVEQVSGIACHTGRHSCFFQKFEGNVDSGDWVAVEPVLKDPEHIYK.

D84 contributes to the Mg(2+) binding site. C85 provides a ligand contact to Zn(2+). Residues D86 and D88 each coordinate Mg(2+). Zn(2+) is bound by residues C102 and C109.

Belongs to the PRA-CH family. In terms of assembly, homodimer. Requires Mg(2+) as cofactor. The cofactor is Zn(2+).

The protein resides in the cytoplasm. The enzyme catalyses 1-(5-phospho-beta-D-ribosyl)-5'-AMP + H2O = 1-(5-phospho-beta-D-ribosyl)-5-[(5-phospho-beta-D-ribosylamino)methylideneamino]imidazole-4-carboxamide. Its pathway is amino-acid biosynthesis; L-histidine biosynthesis; L-histidine from 5-phospho-alpha-D-ribose 1-diphosphate: step 3/9. Catalyzes the hydrolysis of the adenine ring of phosphoribosyl-AMP. This chain is Phosphoribosyl-AMP cyclohydrolase, found in Burkholderia cenocepacia (strain ATCC BAA-245 / DSM 16553 / LMG 16656 / NCTC 13227 / J2315 / CF5610) (Burkholderia cepacia (strain J2315)).